Here is a 500-residue protein sequence, read N- to C-terminus: MTIFDNYEVWFVIGSQHLYGPETLRQVTQHAEHVVKALNTEAKLPCKLVLKPLGTTPDEITAICRDANYDDRCAGLVVWLHTFSPAKMWINGLTMLNKPLLQFHTQFNAALPWDSIDMDFMNLNQTAHGGREFGFIGARMRQQHAVVTGHWQDKQAHERIGSWMRQAVSKQDTRHLKVCRFGDNMREVAVTDGDKVAAQIKFGFSVNTWAVGDLVQVVNSISDGDVNALVDEYESCYTMTPATQIHGEKRQNVLEAARIELGMKRFLEQGGFHAFTTTFEDLHGLKQLPGLAVQRLMQQGYGFAGEGDWKTAALLRIMKVMSTGLQGGTSFMEDYTYHFEKGNDLVLGSHMLEVCPSIAAEEKPILDVQHLGIGGKDDPARLIFNTQTGPAIVASLIDLGDRYRLLVNCIDTVKTPHSLPKLPVANALWKAQPDLPTASEAWILAGGAHHTVFSHALNLNDMRQFAEMHDIEITVIDNDTRLPAFKDALRWNEVYYGFRR.

E306, E333, H350, and H450 together coordinate Mn(2+).

Belongs to the arabinose isomerase family. Homohexamer. Mn(2+) serves as cofactor.

It carries out the reaction beta-L-arabinopyranose = L-ribulose. It functions in the pathway carbohydrate degradation; L-arabinose degradation via L-ribulose; D-xylulose 5-phosphate from L-arabinose (bacterial route): step 1/3. Catalyzes the conversion of L-arabinose to L-ribulose. The polypeptide is L-arabinose isomerase (Escherichia coli O157:H7).